The following is a 221-amino-acid chain: CDP-diacylglycerol--glycerol-3-phosphate 3-phosphatidyltransferase (221 aa).

Helical transmembrane passes span 8–28 (ILTV…LYFH), 34–54 (WFAL…GYLA), 75–95 (MVVI…WLIL), 133–153 (AQMV…LEGI), and 187–207 (ATWL…ITGW).

This sequence belongs to the CDP-alcohol phosphatidyltransferase class-I family.

The protein localises to the cell membrane. It carries out the reaction a CDP-1,2-diacyl-sn-glycerol + sn-glycerol 3-phosphate = a 1,2-diacyl-sn-glycero-3-phospho-(1'-sn-glycero-3'-phosphate) + CMP + H(+). Its pathway is phospholipid metabolism; phosphatidylglycerol biosynthesis; phosphatidylglycerol from CDP-diacylglycerol: step 1/2. In terms of biological role, this protein catalyzes the committed step to the synthesis of the acidic phospholipids. This is CDP-diacylglycerol--glycerol-3-phosphate 3-phosphatidyltransferase (pgsA) from Cereibacter sphaeroides (strain ATCC 17023 / DSM 158 / JCM 6121 / CCUG 31486 / LMG 2827 / NBRC 12203 / NCIMB 8253 / ATH 2.4.1.) (Rhodobacter sphaeroides).